The chain runs to 89 residues: Sodium channel toxin To13 (89 aa).

The signal sequence occupies residues 1 to 18; the sequence is MKTLFLIITSFILLEVEG. Positions 20-87 constitute an LCN-type CS-alpha/beta domain; the sequence is KNGYPRDSKG…TWKNKEPKCK (68 aa). 4 cysteine pairs are disulfide-bonded: cysteine 30/cysteine 86, cysteine 34/cysteine 60, cysteine 45/cysteine 67, and cysteine 49/cysteine 69.

Belongs to the long (4 C-C) scorpion toxin superfamily. Sodium channel inhibitor family. In terms of tissue distribution, expressed by the venom gland.

The protein localises to the secreted. In terms of biological role, inhibits voltage-gated sodium channels (Nav). The chain is Sodium channel toxin To13 from Tityus obscurus (Amazonian scorpion).